Reading from the N-terminus, the 273-residue chain is Anthranilate synthase beta subunit 2, chloroplastic (273 aa).

A chloroplast-targeting transit peptide spans 1–47 (MATAARLLPKIQSPASPAVAEARRRRPSSLRLGVTSGPARTLKQKLV). A disordered region spans residues 15-35 (ASPAVAEARRRRPSSLRLGVT). The Glutamine amidotransferase type-1 domain maps to 70–269 (PIIVIDNYDS…IKIIEGYEAL (200 aa)). 121–123 (GPG) provides a ligand contact to L-glutamine. C148 serves as the catalytic Nucleophile. Residues Q152 and 202 to 203 (SL) each bind L-glutamine. Residues H243 and E245 contribute to the active site.

Heterotetramer consisting of two non-identical subunits: a beta subunit and a large alpha subunit. Expressed in roots and leaves.

The protein localises to the plastid. It localises to the chloroplast. It carries out the reaction chorismate + L-glutamine = anthranilate + pyruvate + L-glutamate + H(+). It participates in amino-acid biosynthesis; L-tryptophan biosynthesis; L-tryptophan from chorismate: step 1/5. Part of a heterotetrameric complex that catalyzes the two-step biosynthesis of anthranilate, an intermediate in the biosynthesis of L-tryptophan. In the first step, the glutamine-binding beta subunit of anthranilate synthase (AS) provides the glutamine amidotransferase activity which generates ammonia as a substrate that, along with chorismate, is used in the second step, catalyzed by the large alpha subunit of AS to produce anthranilate. The protein is Anthranilate synthase beta subunit 2, chloroplastic of Oryza sativa subsp. japonica (Rice).